A 262-amino-acid chain; its full sequence is Flap endonuclease Xni (262 aa).

Residue Asp-105 coordinates Mg(2+). One can recognise a 5'-3' exonuclease domain in the interval 162–254 (ERSQFLDLMA…LKDFRVIDSL (93 aa)). Leu-172, Ala-173, Pro-181, Ile-183, and Ile-186 together coordinate K(+). Residues 185–190 (GIGPKS) form an interaction with DNA region.

This sequence belongs to the Xni family. Requires Mg(2+) as cofactor. The cofactor is K(+).

In terms of biological role, has flap endonuclease activity. During DNA replication, flap endonucleases cleave the 5'-overhanging flap structure that is generated by displacement synthesis when DNA polymerase encounters the 5'-end of a downstream Okazaki fragment. In Shewanella baltica (strain OS195), this protein is Flap endonuclease Xni.